The following is a 475-amino-acid chain: Aspartyl/glutamyl-tRNA(Asn/Gln) amidotransferase subunit B (475 aa).

The protein belongs to the GatB/GatE family. GatB subfamily. As to quaternary structure, heterotrimer of A, B and C subunits.

It catalyses the reaction L-glutamyl-tRNA(Gln) + L-glutamine + ATP + H2O = L-glutaminyl-tRNA(Gln) + L-glutamate + ADP + phosphate + H(+). The enzyme catalyses L-aspartyl-tRNA(Asn) + L-glutamine + ATP + H2O = L-asparaginyl-tRNA(Asn) + L-glutamate + ADP + phosphate + 2 H(+). In terms of biological role, allows the formation of correctly charged Asn-tRNA(Asn) or Gln-tRNA(Gln) through the transamidation of misacylated Asp-tRNA(Asn) or Glu-tRNA(Gln) in organisms which lack either or both of asparaginyl-tRNA or glutaminyl-tRNA synthetases. The reaction takes place in the presence of glutamine and ATP through an activated phospho-Asp-tRNA(Asn) or phospho-Glu-tRNA(Gln). The sequence is that of Aspartyl/glutamyl-tRNA(Asn/Gln) amidotransferase subunit B from Clostridium novyi (strain NT).